We begin with the raw amino-acid sequence, 344 residues long: N-acetyl-gamma-glutamyl-phosphate reductase (344 aa).

Cys-150 is a catalytic residue.

This sequence belongs to the NAGSA dehydrogenase family. Type 1 subfamily.

It is found in the cytoplasm. It carries out the reaction N-acetyl-L-glutamate 5-semialdehyde + phosphate + NADP(+) = N-acetyl-L-glutamyl 5-phosphate + NADPH + H(+). Its pathway is amino-acid biosynthesis; L-arginine biosynthesis; N(2)-acetyl-L-ornithine from L-glutamate: step 3/4. Catalyzes the NADPH-dependent reduction of N-acetyl-5-glutamyl phosphate to yield N-acetyl-L-glutamate 5-semialdehyde. The sequence is that of N-acetyl-gamma-glutamyl-phosphate reductase from Pseudomonas aeruginosa (strain UCBPP-PA14).